We begin with the raw amino-acid sequence, 220 residues long: Antistasin (220 aa).

Residues 1–19 (MNYLFVFLALSAAVTFANA) form the signal peptide. Antistasin-like domains lie at 21 to 46 (CNKIQCRMFCKFGFQQDENGCDICKC), 54 to 79 (CSNRYCKMLCPEGFQVDANGCQICRC), 91 to 117 (CDGLKQCKMHCENGFVRDENGCPKCEC), 120 to 145 (CKQFQCLIFCPHGNEVDENGCKTCKC), 154 to 180 (CDDLKQCRMFCENGFVRDENGCKKCEC), and 183 to 208 (CKNFICQIFCEYGNVVDENGCKTCKC).

It belongs to the protease inhibitor I15 (antistasin) family. Gland cells. It is more strongly expressed in the head than in the gastric tissue.

It localises to the secreted. Functionally, this highly disulfide-bonded protein is a potent inhibitor of factor Xa. Facilitates digestion of tissues and may also protect the gastric tissues from its own digestive enzymes. May have therapeutic utility as an anticoagulant. Also exhibits a strong metastatic activity. The chain is Antistasin from Hydra vulgaris (Hydra).